Consider the following 533-residue polypeptide: Amidophosphoribosyltransferase (533 aa).

The active-site Nucleophile is the Cys2. The region spanning 2-238 (CGILALMLAD…PGECVFIRRS (237 aa)) is the Glutamine amidotransferase type-2 domain. Positions 383 and 384 each coordinate Mg(2+). Ser506 bears the Phosphoserine mark.

The protein in the C-terminal section; belongs to the purine/pyrimidine phosphoribosyltransferase family. It depends on Mg(2+) as a cofactor.

The catalysed reaction is 5-phospho-beta-D-ribosylamine + L-glutamate + diphosphate = 5-phospho-alpha-D-ribose 1-diphosphate + L-glutamine + H2O. It functions in the pathway purine metabolism; IMP biosynthesis via de novo pathway; N(1)-(5-phospho-D-ribosyl)glycinamide from 5-phospho-alpha-D-ribose 1-diphosphate: step 1/2. The sequence is that of Amidophosphoribosyltransferase (ade4) from Schizosaccharomyces pombe (strain 972 / ATCC 24843) (Fission yeast).